Consider the following 480-residue polypeptide: REST corepressor 1 (480 aa).

The segment at 1-105 (MPAMVEKGPE…GGGMRVGPQY (105 aa)) is disordered. 2 stretches are compositionally biased toward low complexity: residues 21–58 (AASAASAAASAASAAASAAASAGTASASAAAAASAAAA) and 66–89 (SLAAAAPNGNSGSNSWEEGSSGSS). The tract at residues 72–251 (PNGNSGSNSW…RHARKQKRER (180 aa)) is interaction with HDAC1. Residues 97-183 (GGMRVGPQYQ…KSLADLPNFT (87 aa)) enclose the ELM2 domain. A Glycyl lysine isopeptide (Lys-Gly) (interchain with G-Cter in SUMO2) cross-link involves residue Lys-116. At Ser-121 the chain carries Phosphoserine. The SANT 1 domain occupies 184–235 (PFPDEWTVEDKVLFEQAFSFHGKTFHRIQQMLPDKSIASLVKFYYSWKKTRT). Residues 238 to 265 (SVMDRHARKQKREREESEDELEETNGSN) adopt a coiled-coil conformation. The segment at 238–308 (SVMDRHARKQ…AKNRAKRKPP (71 aa)) is disordered. Phosphoserine is present on Ser-254. The span at 272–282 (DPNKESKKEVP) shows a compositional bias: basic and acidic residues. Residues 290–378 (VKKEKHSTQA…LPEVIQKCNA (89 aa)) form an interaction with KDM1A region. Residue Lys-291 forms a Glycyl lysine isopeptide (Lys-Gly) (interchain with G-Cter in SUMO2) linkage. The stretch at 328-363 (ATTVLRQLDMELVSIKRQIQNIKQTNSALKEKLDGG) forms a coiled coil. Residues 375-426 (KCNARWTTEEQLLAVQAIRKYGRDFQAISDVIGNKSVVQVKNFFVNYRRRFN) enclose the SANT 2 domain. A disordered region spans residues 436–466 (AEHGKDETNGPANQKPVKSPESSIKIPEEED). A Phosphoserine modification is found at Ser-454. Residue Lys-460 forms a Glycyl lysine isopeptide (Lys-Gly) (interchain with G-Cter in SUMO2) linkage.

It belongs to the CoREST family. As to quaternary structure, component of a BHC histone deacetylase complex that contains HDAC1, HDAC2, HMG20B/BRAF35, KDM1A, RCOR1/CoREST and PHF21A/BHC80. The BHC complex may also contain ZMYM2, ZNF217, ZMYM3, GSE1 and GTF2I. Interacts with REST. Interacts with the SMARCE1/BAF57, suggesting that the BHC complex may recruit the ATP-dependent chromatin-remodeling SWI-SNF complex. Interacts directly with GFI1 and GFI1B in a RCOR/GFI/KDM1A/HDAC complex. Interacts with INMS1. Interacts with SOX2. In terms of tissue distribution, expressed in the external germinal layer (EGL) and internal granular layer (IGL) of the cerebellum and in Purkinje cells (at protein level).

It localises to the nucleus. Its function is as follows. Essential component of the BHC complex, a corepressor complex that represses transcription of neuron-specific genes in non-neuronal cells. The BHC complex is recruited at RE1/NRSE sites by REST and acts by deacetylating and demethylating specific sites on histones, thereby acting as a chromatin modifier. In the BHC complex, it serves as a molecular beacon for the recruitment of molecular machinery, including MeCP2 and SUV39H1, that imposes silencing across a chromosomal interval. Plays a central role in demethylation of Lys-4 of histone H3 by promoting demethylase activity of KDM1A on core histones and nucleosomal substrates. It also protects KDM1A from the proteasome. Component of a RCOR/GFI/KDM1A/HDAC complex that suppresses, via histone deacetylase (HDAC) recruitment, a number of genes implicated in multilineage blood cell development and controls hematopoietic differentiation. The chain is REST corepressor 1 (Rcor1) from Mus musculus (Mouse).